Reading from the N-terminus, the 441-residue chain is Trigger factor (441 aa).

The PPIase FKBP-type domain occupies 163-248; sequence GDQVVFDFVG…IKEVKKPVPA (86 aa).

Belongs to the FKBP-type PPIase family. Tig subfamily.

It localises to the cytoplasm. It catalyses the reaction [protein]-peptidylproline (omega=180) = [protein]-peptidylproline (omega=0). Functionally, involved in protein export. Acts as a chaperone by maintaining the newly synthesized protein in an open conformation. Functions as a peptidyl-prolyl cis-trans isomerase. The chain is Trigger factor from Jannaschia sp. (strain CCS1).